The chain runs to 313 residues: Pyrimidine-specific ribonucleoside hydrolase RihB (313 aa).

The Proton acceptor role is filled by aspartate 11. The Ca(2+) site is built by aspartate 11, aspartate 16, and valine 124. Substrate-binding residues include glutamine 227 and histidine 239. Aspartate 240 contacts Ca(2+).

This sequence belongs to the IUNH family. RihB subfamily. Homotetramer. Ca(2+) is required as a cofactor.

The catalysed reaction is a pyrimidine ribonucleoside + H2O = a pyrimidine nucleobase + D-ribose. Functionally, hydrolyzes cytidine or uridine to ribose and cytosine or uracil, respectively. Has a clear preference for cytidine over uridine. Strictly specific for ribonucleosides. This chain is Pyrimidine-specific ribonucleoside hydrolase RihB, found in Escherichia coli O9:H4 (strain HS).